Reading from the N-terminus, the 274-residue chain is Cytochrome b-c1 complex subunit Rieske, mitochondrial (274 aa).

Residues 79 to 103 (SHTDVKVPDFSEYRRLEVLDSTKSS) are Mitochondrial matrix-facing. The helical transmembrane segment at 104 to 140 (RESSEARKGFSYLVTGVTTVGVAYAAKNAVTQFVSSM) threads the bilayer. Topologically, residues 141–274 (SASADVLALA…FTSDDMVIVG (134 aa)) are mitochondrial intermembrane. Residues 187-272 (EAAVELSQLR…YEFTSDDMVI (86 aa)) enclose the Rieske domain. Cysteine 217, histidine 219, cysteine 236, histidine 239, and serine 241 together coordinate [2Fe-2S] cluster. A disulfide bridge links cysteine 222 with cysteine 238.

This sequence belongs to the Rieske iron-sulfur protein family. Component of the ubiquinol-cytochrome c oxidoreductase (cytochrome b-c1 complex, complex III, CIII), a multisubunit enzyme composed of 11 subunits. The complex is composed of 3 respiratory subunits cytochrome b, cytochrome c1 and Rieske protein UQCRFS1, 2 core protein subunits UQCRC1/QCR1 and UQCRC2/QCR2, and 6 low-molecular weight protein subunits UQCRH/QCR6, UQCRB/QCR7, UQCRQ/QCR8, UQCR10/QCR9, UQCR11/QCR10 and subunit 9, the cleavage product of Rieske protein UQCRFS1. The complex exists as an obligatory dimer and forms supercomplexes (SCs) in the inner mitochondrial membrane with NADH-ubiquinone oxidoreductase (complex I, CI) and cytochrome c oxidase (complex IV, CIV), resulting in different assemblies (supercomplex SCI(1)III(2)IV(1) and megacomplex MCI(2)III(2)IV(2)). Incorporation of the Rieske protein UQCRFS1 is the penultimate step in complex III assembly. Interacts with TTC19, which is involved in the clearance of UQCRFS1 fragments. In terms of assembly, component of the ubiquinol-cytochrome c oxidoreductase (cytochrome b-c1 complex, complex III, CIII). Subunit 9 corresponds to the mitochondrial targeting sequence (MTS) of Rieske protein UQCRFS1. It is retained after processing and incorporated inside complex III, where it remains bound to the complex and localizes between the 2 core subunits UQCRC1/QCR1 and UQCRC2/QCR2. The cofactor is [2Fe-2S] cluster. In terms of processing, proteolytic processing is necessary for the correct insertion of UQCRFS1 in the complex III dimer. Several fragments are generated during UQCRFS1 insertion, most probably due to the endogenous matrix-processing peptidase (MPP) activity of the 2 core protein subunits UQCRC1/QCR1 and UQCRC2/QCR2, which are homologous to the 2 mitochondrial-processing peptidase (MPP) subunits beta-MPP and alpha-MPP respectively. The action of the protease is also necessary for the clearance of the UQCRFS1 fragments.

The protein resides in the mitochondrion inner membrane. It catalyses the reaction a quinol + 2 Fe(III)-[cytochrome c](out) = a quinone + 2 Fe(II)-[cytochrome c](out) + 2 H(+)(out). Its function is as follows. Component of the ubiquinol-cytochrome c oxidoreductase, a multisubunit transmembrane complex that is part of the mitochondrial electron transport chain which drives oxidative phosphorylation. The respiratory chain contains 3 multisubunit complexes succinate dehydrogenase (complex II, CII), ubiquinol-cytochrome c oxidoreductase (cytochrome b-c1 complex, complex III, CIII) and cytochrome c oxidase (complex IV, CIV), that cooperate to transfer electrons derived from NADH and succinate to molecular oxygen, creating an electrochemical gradient over the inner membrane that drives transmembrane transport and the ATP synthase. The cytochrome b-c1 complex catalyzes electron transfer from ubiquinol to cytochrome c, linking this redox reaction to translocation of protons across the mitochondrial inner membrane, with protons being carried across the membrane as hydrogens on the quinol. In the process called Q cycle, 2 protons are consumed from the matrix, 4 protons are released into the intermembrane space and 2 electrons are passed to cytochrome c. The Rieske protein is a catalytic core subunit containing a [2Fe-2S] iron-sulfur cluster. It cycles between 2 conformational states during catalysis to transfer electrons from the quinol bound in the Q(0) site in cytochrome b to cytochrome c1. Incorporation of UQCRFS1 is the penultimate step in complex III assembly. Functionally, component of the ubiquinol-cytochrome c oxidoreductase (cytochrome b-c1 complex, complex III, CIII). UQCRFS1 undergoes proteolytic processing once it is incorporated in the complex III dimer. One of the fragments, called subunit 9, corresponds to its mitochondrial targeting sequence (MTS). The proteolytic processing is necessary for the correct insertion of UQCRFS1 in the complex III dimer, but the persistence of UQCRFS1-derived fragments may prevent newly imported UQCRFS1 to be processed and assembled into complex III and is detrimental for the complex III structure and function. The sequence is that of Cytochrome b-c1 complex subunit Rieske, mitochondrial (UQCRFS1) from Pan paniscus (Pygmy chimpanzee).